The primary structure comprises 602 residues: Raftlin (602 aa).

Residue Gly-2 is the site of N-myristoyl glycine attachment. The S-palmitoyl cysteine moiety is linked to residue Cys-3. A compositionally biased stretch (polar residues) spans 178–195 (TPASNNSVQSRDNKNVSN). Disordered stretches follow at residues 178–282 (TPAS…RCSK), 451–495 (KKES…EVTE), and 524–567 (NETA…QSAP). Composition is skewed to basic and acidic residues over residues 197 to 209 (PEDHASLDGEKID) and 244 to 265 (PDCKSAKGSKEQHEHPGGREAP). Positions 468–477 (KPMKKSRKTK) are enriched in basic residues.

It belongs to the raftlin family.

It is found in the cell membrane. Functionally, may play a pivotal role in the formation and/or maintenance of lipid rafts. May regulate B-cell antigen receptor-mediated signaling. This Gallus gallus (Chicken) protein is Raftlin (RFTN1).